The sequence spans 359 residues: 3-dehydroquinate synthase (359 aa).

NAD(+) contacts are provided by residues Asp70–Lys75, Gly105–Asp109, Thr129–Thr130, Lys142, Lys151, and Phe169–Thr172. Zn(2+) contacts are provided by Glu184, His247, and His264.

Belongs to the sugar phosphate cyclases superfamily. Dehydroquinate synthase family. Co(2+) serves as cofactor. It depends on Zn(2+) as a cofactor. NAD(+) is required as a cofactor.

Its subcellular location is the cytoplasm. The catalysed reaction is 7-phospho-2-dehydro-3-deoxy-D-arabino-heptonate = 3-dehydroquinate + phosphate. The protein operates within metabolic intermediate biosynthesis; chorismate biosynthesis; chorismate from D-erythrose 4-phosphate and phosphoenolpyruvate: step 2/7. In terms of biological role, catalyzes the conversion of 3-deoxy-D-arabino-heptulosonate 7-phosphate (DAHP) to dehydroquinate (DHQ). The sequence is that of 3-dehydroquinate synthase from Francisella tularensis subsp. tularensis (strain WY96-3418).